The primary structure comprises 97 residues: uncharacterized protein (97 aa).

This is an uncharacterized protein from Caenorhabditis elegans.